The sequence spans 348 residues: E3 ubiquitin-protein ligase MARCHF9 (348 aa).

The segment at 48–96 (ARDGDGDEEEYYGSEPRARGLAGDKEPRAGPPPPPAPPPPPPGALDALS) is disordered. The segment covering 63–75 (PRARGLAGDKEPR) has biased composition (basic and acidic residues). Positions 76-90 (AGPPPPPAPPPPPPG) are enriched in pro residues. An RING-CH-type zinc finger spans residues 102 to 162 (DSGLRTPQCR…ELCYFKYQVL (61 aa)). Zn(2+) contacts are provided by C110, C113, C126, C128, H136, C139, C152, and C155. A run of 2 helical transmembrane segments spans residues 185–205 (IAAI…LIWS) and 219–239 (LFQI…GLIV). Disordered regions lie at residues 272–304 (GDTG…AAQR) and 328–348 (PPDA…VTTV).

In terms of assembly, homodimer.

It is found in the golgi apparatus membrane. The protein resides in the lysosome membrane. The enzyme catalyses S-ubiquitinyl-[E2 ubiquitin-conjugating enzyme]-L-cysteine + [acceptor protein]-L-lysine = [E2 ubiquitin-conjugating enzyme]-L-cysteine + N(6)-ubiquitinyl-[acceptor protein]-L-lysine.. It participates in protein modification; protein ubiquitination. Functionally, E3 ubiquitin-protein ligase that may mediate ubiquitination of MHC-I, CD4 and ICAM1, and promote their subsequent endocytosis and sorting to lysosomes via multivesicular bodies. E3 ubiquitin ligases accept ubiquitin from an E2 ubiquitin-conjugating enzyme in the form of a thioester and then directly transfer the ubiquitin to targeted substrates. This Mus musculus (Mouse) protein is E3 ubiquitin-protein ligase MARCHF9 (Marchf9).